The chain runs to 42 residues: Large ribosomal subunit protein bL36 (42 aa).

The protein belongs to the bacterial ribosomal protein bL36 family.

The chain is Large ribosomal subunit protein bL36 from Anaplasma phagocytophilum (strain HZ).